The sequence spans 534 residues: uncharacterized protein (534 aa).

Disordered stretches follow at residues 1 to 93, 123 to 260, 313 to 349, and 383 to 505; these read MSSS…DDTG, SPES…LSSA, AAATGRLPRPSPRRKRVQEKKSLGGVSKPALGRTFPS, and PWGA…QGCP. Positions 35-45 are enriched in pro residues; that stretch reads GPGPDPGPEPG. Ser-87 and Ser-123 each carry phosphoserine. Positions 145 to 161 are enriched in low complexity; the sequence is RGAAAQRCGEAARAEAG. The segment covering 230-239 has biased composition (basic and acidic residues); the sequence is SPKDPRDTPR.

This is an uncharacterized protein from Bos taurus (Bovine).